Consider the following 897-residue polypeptide: Probable bifunctional chitinase/lysozyme (897 aa).

The N-terminal stretch at 1–24 (MKLNIFTKSMIGMGLVCSALPALA) is a signal peptide. Positions 25 to 91 (MEAWNNQQGG…SQFGNTLSCE (67 aa)) constitute a Chitin-binding type-3 1 domain. Disordered stretches follow at residues 90 to 127 (CEKS…SNSS), 182 to 222 (TEIS…PADK), and 287 to 333 (QYGN…DSVN). The segment covering 95-111 (SSSSSNSNTPASNTPAN) has biased composition (low complexity). Polar residues-rich tracts occupy residues 113-127 (GSAT…SNSS) and 182-197 (TEIS…TSAP). In terms of domain architecture, Chitin-binding type-3 2 spans 128–194 (VVAWNKQQGG…SETSNPQSCT (67 aa)). The span at 198–216 (QPSPDVKPAPDVKPAPDVQ) shows a compositional bias: pro residues. The 67-residue stretch at 229 to 295 (VVAWKGQEGS…SQYGNPGSCS (67 aa)) folds into the Chitin-binding type-3 3 domain. Residues 309–318 (DPTPETPVTP) show a composition bias toward pro residues. Polar residues predominate over residues 322 to 333 (NSEPSTPADSVN). Chitin-binding type-3 domains are found at residues 337–403 (LQAW…TTCE) and 459–529 (AKAW…PQFN). Positions 586–877 (KHVYAPYVDF…TNLSPEFHGL (292 aa)) constitute a GH18 domain. Cys-628 and Cys-673 are disulfide-bonded. Residue Glu-700 is the Proton donor of the active site.

This sequence belongs to the glycosyl hydrolase 18 family. Chitinase class II subfamily.

It is found in the periplasm. The catalysed reaction is Random endo-hydrolysis of N-acetyl-beta-D-glucosaminide (1-&gt;4)-beta-linkages in chitin and chitodextrins.. The enzyme catalyses Hydrolysis of (1-&gt;4)-beta-linkages between N-acetylmuramic acid and N-acetyl-D-glucosamine residues in a peptidoglycan and between N-acetyl-D-glucosamine residues in chitodextrins.. Functionally, bifunctional enzyme with lysozyme/chitinase activity. The protein is Probable bifunctional chitinase/lysozyme (chiA) of Escherichia coli (strain K12).